The primary structure comprises 66 residues: MPKLKTKSGAKKRFKVTGTGKVVSAHAGKRHGMIKRTKKQIRQLRGTRTLFKTDGDNIKQYFLPNA.

It belongs to the bacterial ribosomal protein bL35 family.

In Afipia carboxidovorans (strain ATCC 49405 / DSM 1227 / KCTC 32145 / OM5) (Oligotropha carboxidovorans), this protein is Large ribosomal subunit protein bL35.